A 528-amino-acid chain; its full sequence is GMP synthase [glutamine-hydrolyzing] (528 aa).

The region spanning 13–204 (AIVILDFGSQ…VYHVCGCDPD (192 aa)) is the Glutamine amidotransferase type-1 domain. The active-site Nucleophile is cysteine 90. Catalysis depends on residues histidine 178 and glutamate 180. The 199-residue stretch at 205–403 (WTTAAFIDEA…LGLPEEIVRR (199 aa)) folds into the GMPS ATP-PPase domain. 232-238 (SGGVDSS) is a binding site for ATP.

Homodimer.

The enzyme catalyses XMP + L-glutamine + ATP + H2O = GMP + L-glutamate + AMP + diphosphate + 2 H(+). The protein operates within purine metabolism; GMP biosynthesis; GMP from XMP (L-Gln route): step 1/1. Functionally, catalyzes the synthesis of GMP from XMP. The chain is GMP synthase [glutamine-hydrolyzing] from Synechococcus sp. (strain CC9605).